Consider the following 496-residue polypeptide: Lysine--tRNA ligase (496 aa).

The Mg(2+) site is built by E408 and E415.

Belongs to the class-II aminoacyl-tRNA synthetase family. Homodimer. Mg(2+) is required as a cofactor.

The protein resides in the cytoplasm. The enzyme catalyses tRNA(Lys) + L-lysine + ATP = L-lysyl-tRNA(Lys) + AMP + diphosphate. The polypeptide is Lysine--tRNA ligase (Legionella pneumophila (strain Lens)).